Reading from the N-terminus, the 321-residue chain is Lipoyl synthase (321 aa).

Cys-68, Cys-73, Cys-79, Cys-94, Cys-98, Cys-101, and Ser-308 together coordinate [4Fe-4S] cluster. The 218-residue stretch at 80 to 297 (FNHGTATFMI…KALADELGFT (218 aa)) folds into the Radical SAM core domain.

It belongs to the radical SAM superfamily. Lipoyl synthase family. It depends on [4Fe-4S] cluster as a cofactor.

The protein resides in the cytoplasm. It carries out the reaction [[Fe-S] cluster scaffold protein carrying a second [4Fe-4S](2+) cluster] + N(6)-octanoyl-L-lysyl-[protein] + 2 oxidized [2Fe-2S]-[ferredoxin] + 2 S-adenosyl-L-methionine + 4 H(+) = [[Fe-S] cluster scaffold protein] + N(6)-[(R)-dihydrolipoyl]-L-lysyl-[protein] + 4 Fe(3+) + 2 hydrogen sulfide + 2 5'-deoxyadenosine + 2 L-methionine + 2 reduced [2Fe-2S]-[ferredoxin]. Its pathway is protein modification; protein lipoylation via endogenous pathway; protein N(6)-(lipoyl)lysine from octanoyl-[acyl-carrier-protein]: step 2/2. Functionally, catalyzes the radical-mediated insertion of two sulfur atoms into the C-6 and C-8 positions of the octanoyl moiety bound to the lipoyl domains of lipoate-dependent enzymes, thereby converting the octanoylated domains into lipoylated derivatives. This is Lipoyl synthase from Shewanella oneidensis (strain ATCC 700550 / JCM 31522 / CIP 106686 / LMG 19005 / NCIMB 14063 / MR-1).